The chain runs to 189 residues: dTTP/UTP pyrophosphatase (189 aa).

Asp-70 serves as the catalytic Proton acceptor.

The protein belongs to the Maf family. YhdE subfamily. The cofactor is a divalent metal cation.

The protein localises to the cytoplasm. The enzyme catalyses dTTP + H2O = dTMP + diphosphate + H(+). The catalysed reaction is UTP + H2O = UMP + diphosphate + H(+). In terms of biological role, nucleoside triphosphate pyrophosphatase that hydrolyzes dTTP and UTP. May have a dual role in cell division arrest and in preventing the incorporation of modified nucleotides into cellular nucleic acids. This is dTTP/UTP pyrophosphatase from Akkermansia muciniphila (strain ATCC BAA-835 / DSM 22959 / JCM 33894 / BCRC 81048 / CCUG 64013 / CIP 107961 / Muc).